The sequence spans 322 residues: Malate dehydrogenase 1 (322 aa).

Residues 10–15 (GSGQIG) and Asp-34 contribute to the NAD(+) site. The substrate site is built by Arg-83 and Arg-89. NAD(+)-binding positions include Asn-96 and 119-121 (ITN). Substrate contacts are provided by Asn-121 and Arg-152. His-176 acts as the Proton acceptor in catalysis.

The protein belongs to the LDH/MDH superfamily. MDH type 3 family.

The catalysed reaction is (S)-malate + NAD(+) = oxaloacetate + NADH + H(+). Catalyzes the reversible oxidation of malate to oxaloacetate. In Rhodopseudomonas palustris (strain BisB18), this protein is Malate dehydrogenase 1.